Reading from the N-terminus, the 142-residue chain is Coactosin-like protein (142 aa).

At A2 the chain carries N-acetylalanine. The 129-residue stretch at A2–K130 folds into the ADF-H domain. A flexible and important for F-actin binding region spans residues T66–K75. K102 and K126 each carry N6-acetyllysine.

The protein belongs to the actin-binding proteins ADF family. Coactosin subfamily. As to quaternary structure, interacts with 5-lipoxygenase (ALOX5/5LO) in a calcium-independent manner. Binds to F-actin with a stoichiometry of 1:2.

The protein localises to the cytoplasm. It is found in the cytoskeleton. Its subcellular location is the nucleus. In terms of biological role, binds to F-actin in a calcium-independent manner. Has no direct effect on actin depolymerization. Acts as a chaperone for ALOX5 (5LO), influencing both its stability and activity in leukotrienes synthesis. This Bos taurus (Bovine) protein is Coactosin-like protein (COTL1).